Reading from the N-terminus, the 396-residue chain is Phosphoglycerate kinase (396 aa).

Substrate contacts are provided by residues 19–21 (DFN), R35, 58–61 (HLGR), R117, and R150. Residues K201, E323, and 349–352 (GGDT) each bind ATP.

It belongs to the phosphoglycerate kinase family. In terms of assembly, monomer.

It is found in the cytoplasm. The enzyme catalyses (2R)-3-phosphoglycerate + ATP = (2R)-3-phospho-glyceroyl phosphate + ADP. The protein operates within carbohydrate degradation; glycolysis; pyruvate from D-glyceraldehyde 3-phosphate: step 2/5. The chain is Phosphoglycerate kinase from Desulfosudis oleivorans (strain DSM 6200 / JCM 39069 / Hxd3) (Desulfococcus oleovorans).